The chain runs to 220 residues: Probable nicotinate-nucleotide adenylyltransferase (220 aa).

This sequence belongs to the NadD family.

The enzyme catalyses nicotinate beta-D-ribonucleotide + ATP + H(+) = deamido-NAD(+) + diphosphate. Its pathway is cofactor biosynthesis; NAD(+) biosynthesis; deamido-NAD(+) from nicotinate D-ribonucleotide: step 1/1. In terms of biological role, catalyzes the reversible adenylation of nicotinate mononucleotide (NaMN) to nicotinic acid adenine dinucleotide (NaAD). The chain is Probable nicotinate-nucleotide adenylyltransferase from Yersinia enterocolitica serotype O:8 / biotype 1B (strain NCTC 13174 / 8081).